A 620-amino-acid chain; its full sequence is MTEMRSAKIMSGRVFAGARALYRAAGVSGDDMGKKPIIAIANSFDEFLPGHVHLNKVGRIVSEAIREAGGIPREFNTMAVDDGIAMGHTGMLYSLPSRDIIADTVEYQCNAHCADALICIPNCDKVVPGMLMAALRLNIPTVFVSGGPMEAGTTVLADGTVKSTDLIDVMYATADDNVSDEELLNYEKTVCPTCGSCAGMFTANSMNCLTEAIGLALPGNGTILASHSYRKDLFKRAAKQVVKIAHQYYDDSDDSVLPRSIATKEAFENAMTMDVAMGGSTNTVLHILAMAQSADVDFTLDDIERISHTVPCICKASPSGKWEISDVHRAGGITGILGELDRAGKLHTNVHSIDYPTLEAKLADWDIMRPTCTEEAQQMYKAAPGHIISPEPWTHTTLFDSLDRDRTNGAIHDINHPEIHEGGLAVLRGNLAPDGCVVKTAGVPPEIWKFRGPALVVDSQEQAIEVILNDTLKPGMALVIRYEGPKGGPGMQEMLYPTSFVKGKGIGKQVAMLTDGRYSGGSSGLAIGHMAPEAANKGPVALIKNGDIIDIDIEARSVNVELTDEQLDERRRELEAGDGYVAHRNRHVSQALKAYAAFARSADKGATRDPELINKLSGLD.

Aspartate 82 provides a ligand contact to Mg(2+). Cysteine 123 is a [2Fe-2S] cluster binding site. Positions 124 and 125 each coordinate Mg(2+). Lysine 125 carries the N6-carboxylysine modification. Cysteine 197 is a [2Fe-2S] cluster binding site. Glutamate 493 serves as a coordination point for Mg(2+). Serine 519 (proton acceptor) is an active-site residue.

It belongs to the IlvD/Edd family. Homodimer. It depends on [2Fe-2S] cluster as a cofactor. Mg(2+) is required as a cofactor.

The catalysed reaction is (2R)-2,3-dihydroxy-3-methylbutanoate = 3-methyl-2-oxobutanoate + H2O. It carries out the reaction (2R,3R)-2,3-dihydroxy-3-methylpentanoate = (S)-3-methyl-2-oxopentanoate + H2O. The protein operates within amino-acid biosynthesis; L-isoleucine biosynthesis; L-isoleucine from 2-oxobutanoate: step 3/4. Its pathway is amino-acid biosynthesis; L-valine biosynthesis; L-valine from pyruvate: step 3/4. Functions in the biosynthesis of branched-chain amino acids. Catalyzes the dehydration of (2R,3R)-2,3-dihydroxy-3-methylpentanoate (2,3-dihydroxy-3-methylvalerate) into 2-oxo-3-methylpentanoate (2-oxo-3-methylvalerate) and of (2R)-2,3-dihydroxy-3-methylbutanoate (2,3-dihydroxyisovalerate) into 2-oxo-3-methylbutanoate (2-oxoisovalerate), the penultimate precursor to L-isoleucine and L-valine, respectively. In Bifidobacterium longum (strain NCC 2705), this protein is Dihydroxy-acid dehydratase.